A 434-amino-acid chain; its full sequence is Adenylosuccinate synthetase (434 aa).

GTP is bound by residues 22-28 and 50-52; these read GDEGKGK and GHT. Residue Asp23 is the Proton acceptor of the active site. Residues Asp23 and Gly50 each contribute to the Mg(2+) site. Residues 23–26, 48–51, Thr139, Arg153, Gln234, Thr249, and Arg313 each bind IMP; these read DEGK and NAGH. His51 (proton donor) is an active-site residue. 309-315 contributes to the substrate binding site; that stretch reads ATTGRKR. GTP is bound by residues Arg315, 341–343, and 423–425; these read KLD and SVG.

Belongs to the adenylosuccinate synthetase family. As to quaternary structure, homodimer. Mg(2+) serves as cofactor.

It is found in the cytoplasm. The enzyme catalyses IMP + L-aspartate + GTP = N(6)-(1,2-dicarboxyethyl)-AMP + GDP + phosphate + 2 H(+). The protein operates within purine metabolism; AMP biosynthesis via de novo pathway; AMP from IMP: step 1/2. Its function is as follows. Plays an important role in the de novo pathway of purine nucleotide biosynthesis. Catalyzes the first committed step in the biosynthesis of AMP from IMP. The chain is Adenylosuccinate synthetase from Chlorobium phaeobacteroides (strain DSM 266 / SMG 266 / 2430).